A 173-amino-acid polypeptide reads, in one-letter code: Flavodoxin (173 aa).

Positions 2–168 (IGIFFSTSTG…RVAGWVEAVV (167 aa)) constitute a Flavodoxin-like domain.

Belongs to the flavodoxin family. FMN is required as a cofactor.

Its function is as follows. Low-potential electron donor to a number of redox enzymes. This Chondrus crispus (Carrageen Irish moss) protein is Flavodoxin.